A 471-amino-acid chain; its full sequence is Arginine biosynthesis bifunctional protein ArgJ, mitochondrial (471 aa).

Substrate-binding residues include Thr-190, Lys-216, Thr-239, Glu-327, Asn-466, and Ser-471. Thr-239 functions as the Nucleophile in the catalytic mechanism.

This sequence belongs to the ArgJ family. As to quaternary structure, heterodimer of an alpha and a beta chain. In terms of processing, the alpha and beta chains are autoproteolytically processed from a single precursor protein within the mitochondrion.

The protein localises to the mitochondrion matrix. The catalysed reaction is N(2)-acetyl-L-ornithine + L-glutamate = N-acetyl-L-glutamate + L-ornithine. It catalyses the reaction L-glutamate + acetyl-CoA = N-acetyl-L-glutamate + CoA + H(+). It functions in the pathway amino-acid biosynthesis; L-arginine biosynthesis; L-ornithine and N-acetyl-L-glutamate from L-glutamate and N(2)-acetyl-L-ornithine (cyclic): step 1/1. It participates in amino-acid biosynthesis; L-arginine biosynthesis; N(2)-acetyl-L-ornithine from L-glutamate: step 1/4. Catalyzes two activities which are involved in the cyclic version of arginine biosynthesis: the synthesis of acetylglutamate from glutamate and acetyl-CoA, and of ornithine by transacetylation between acetylornithine and glutamate. This Coprinopsis cinerea (strain Okayama-7 / 130 / ATCC MYA-4618 / FGSC 9003) (Inky cap fungus) protein is Arginine biosynthesis bifunctional protein ArgJ, mitochondrial.